Consider the following 261-residue polypeptide: Cytochrome c oxidase subunit 3 (261 aa).

Topologically, residues 1–15 (MTHQTHAYHMVNPSP) are mitochondrial matrix. The helical transmembrane segment at 16 to 34 (WPLTGALSALLMTSGLIMW) threads the bilayer. Residues 35-40 (FHFNST) are Mitochondrial intermembrane-facing. Residues 41-66 (TLLMLGLTTNMLTMYQWWRDVVREST) traverse the membrane as a helical segment. Residues 67 to 72 (FQGHHT) lie on the Mitochondrial matrix side of the membrane. Residues 73 to 105 (PNVQKGLRYGMILFIISEVLFFTGFFWAFYHSS) traverse the membrane as a helical segment. The Mitochondrial intermembrane segment spans residues 106 to 128 (LAPTPELGGCWPPTGIHPLNPLE). Residues 129–152 (VPLLNTSVLLASGVSITWAHHSLM) form a helical membrane-spanning segment. Residues 153–155 (EGN) are Mitochondrial matrix-facing. The helical transmembrane segment at 156 to 183 (RNHMLQALFITIALGVYFTLLQASEYYE) threads the bilayer. Residues 184–190 (APFTISD) are Mitochondrial intermembrane-facing. A helical membrane pass occupies residues 191-223 (GVYGSTFFVATGFHGLHVIIGSTFLIVCFFRQL). Residues 224-232 (KFHFTSNHH) are Mitochondrial matrix-facing. A helical membrane pass occupies residues 233–256 (FGFEAAAWYWHFVDVVWLFLYVSI). Residues 257-261 (YWWGS) lie on the Mitochondrial intermembrane side of the membrane.

The protein belongs to the cytochrome c oxidase subunit 3 family. Component of the cytochrome c oxidase (complex IV, CIV), a multisubunit enzyme composed of 14 subunits. The complex is composed of a catalytic core of 3 subunits MT-CO1, MT-CO2 and MT-CO3, encoded in the mitochondrial DNA, and 11 supernumerary subunits COX4I, COX5A, COX5B, COX6A, COX6B, COX6C, COX7A, COX7B, COX7C, COX8 and NDUFA4, which are encoded in the nuclear genome. The complex exists as a monomer or a dimer and forms supercomplexes (SCs) in the inner mitochondrial membrane with NADH-ubiquinone oxidoreductase (complex I, CI) and ubiquinol-cytochrome c oxidoreductase (cytochrome b-c1 complex, complex III, CIII), resulting in different assemblies (supercomplex SCI(1)III(2)IV(1) and megacomplex MCI(2)III(2)IV(2)).

Its subcellular location is the mitochondrion inner membrane. It carries out the reaction 4 Fe(II)-[cytochrome c] + O2 + 8 H(+)(in) = 4 Fe(III)-[cytochrome c] + 2 H2O + 4 H(+)(out). In terms of biological role, component of the cytochrome c oxidase, the last enzyme in the mitochondrial electron transport chain which drives oxidative phosphorylation. The respiratory chain contains 3 multisubunit complexes succinate dehydrogenase (complex II, CII), ubiquinol-cytochrome c oxidoreductase (cytochrome b-c1 complex, complex III, CIII) and cytochrome c oxidase (complex IV, CIV), that cooperate to transfer electrons derived from NADH and succinate to molecular oxygen, creating an electrochemical gradient over the inner membrane that drives transmembrane transport and the ATP synthase. Cytochrome c oxidase is the component of the respiratory chain that catalyzes the reduction of oxygen to water. Electrons originating from reduced cytochrome c in the intermembrane space (IMS) are transferred via the dinuclear copper A center (CU(A)) of subunit 2 and heme A of subunit 1 to the active site in subunit 1, a binuclear center (BNC) formed by heme A3 and copper B (CU(B)). The BNC reduces molecular oxygen to 2 water molecules using 4 electrons from cytochrome c in the IMS and 4 protons from the mitochondrial matrix. This chain is Cytochrome c oxidase subunit 3 (MT-CO3), found in Gazella cuvieri (Cuvier's gazelle).